Here is a 220-residue protein sequence, read N- to C-terminus: Large ribosomal subunit protein uL3 (220 aa).

Residues 113–143 (GTTKGHGYQGNIHKDGQRRGPMAHGSRYHRR) form a disordered region.

This sequence belongs to the universal ribosomal protein uL3 family. Part of the 50S ribosomal subunit. Forms a cluster with proteins L14 and L19.

Its function is as follows. One of the primary rRNA binding proteins, it binds directly near the 3'-end of the 23S rRNA, where it nucleates assembly of the 50S subunit. This is Large ribosomal subunit protein uL3 from Limosilactobacillus fermentum (strain NBRC 3956 / LMG 18251) (Lactobacillus fermentum).